Here is a 92-residue protein sequence, read N- to C-terminus: Protein S100-B (92 aa).

S2 bears the Blocked amino end (Ser); alternate mark. Position 2 is an N-acetylserine; alternate (S2). EF-hand domains are found at residues 13–48 (DVFHQYSGREGDKHKLKKSELKELINNELSHFLEEI) and 49–84 (KEQEVVDKVMETLDNDGDGECDFQEFMAFVAMVTTA). A Zn(2+)-binding site is contributed by H16. Positions 19, 22, and 24 each coordinate Ca(2+). H26 serves as a coordination point for Zn(2+). Ca(2+)-binding residues include K27, E32, D62, D64, D66, E68, and E73. H86 and H91 together coordinate Zn(2+).

The protein belongs to the S-100 family. In terms of assembly, dimer of either two alpha chains, or two beta chains, or one alpha and one beta chain. The S100B dimer binds two molecules of STK38. Interacts with CACYBP in a calcium-dependent manner. Interacts with ATAD3A; this interaction probably occurs in the cytosol prior to ATAD3A mitochondrial targeting. Interacts with S100A6. The S100B dimer interacts with two molecules of CAPZA1. Interacts with AGER. Interacts with PPP5C (via TPR repeats); the interaction is calcium-dependent and modulates PPP5C activity. Interacts with TPPP; this interaction inhibits TPPP dimerization. Interacts with isoform CLSTN3beta of CLSTN3; interaction promotes secretion. In terms of tissue distribution, although predominant among the water-soluble brain proteins, S100 is also found in a variety of other tissues.

The protein resides in the cytoplasm. It is found in the nucleus. Its subcellular location is the secreted. In terms of biological role, small zinc- and- and calcium-binding protein that is highly expressed in astrocytes and constitutes one of the most abundant soluble proteins in brain. Weakly binds calcium but binds zinc very tightly-distinct binding sites with different affinities exist for both ions on each monomer. Physiological concentrations of potassium ion antagonize the binding of both divalent cations, especially affecting high-affinity calcium-binding sites. Acts as a neurotrophic factor that promotes astrocytosis and axonal proliferation. Involved in innervation of thermogenic adipose tissue by acting as an adipocyte-derived neurotrophic factor that promotes sympathetic innervation of adipose tissue. Binds to and initiates the activation of STK38 by releasing autoinhibitory intramolecular interactions within the kinase. Interaction with AGER after myocardial infarction may play a role in myocyte apoptosis by activating ERK1/2 and p53/TP53 signaling. Could assist ATAD3A cytoplasmic processing, preventing aggregation and favoring mitochondrial localization. May mediate calcium-dependent regulation on many physiological processes by interacting with other proteins, such as TPR-containing proteins, and modulating their activity. The chain is Protein S100-B from Homo sapiens (Human).